Reading from the N-terminus, the 399-residue chain is uncharacterized protein (399 aa).

Over residues 197–206 the composition is skewed to polar residues; that stretch reads ENSSASSVTS. The disordered stretch occupies residues 197-224; that stretch reads ENSSASSVTSEECEQDVMDEQSAEDNEE. Acidic residues predominate over residues 207-224; that stretch reads EECEQDVMDEQSAEDNEE.

This is an uncharacterized protein from Diadromus pulchellus (Parasitic wasp).